The sequence spans 465 residues: Zinc finger and BTB domain-containing protein 32 (465 aa).

A BTB domain is found at 29–87; it reads CDTLITVGGLEFPAHSLVLAGASPRLGCRGRWALVEDISPSTFAQILTFVYGESIELQP. 2 disordered regions span residues 111 to 179 and 285 to 310; these read RAQK…EMAG and QNQLASSSPTPGSFPQGTESLSPWQI. Basic and acidic residues-rich tracts occupy residues 123 to 139 and 147 to 176; these read PGLKRHQQSEDFMRGSE and EKQKPEKDFRSNGREQEMSHKHKAPGERPE. C2H2-type zinc fingers lie at residues 350 to 372, 378 to 400, and 405 to 427; these read YSCSVCGKRFSLKHQMETHYRVH, FSCSLCPQRSRDFSAMTKHLRTH, and YRCPLCRAGCPSLASMQAHMRGH.

Belongs to the krueppel C2H2-type zinc-finger protein family. As to quaternary structure, homodimer (via PTB domain). Interacts with the N-terminal of FANCC. Interacts with ZBTB16. Interacts with GATA3. As to expression, isoform 1 is testis-specific and is not expressed in lymphoid organs such as thymus or spleen. Isoform 2 is expressed in both B- and T-lymphoid cells.

It is found in the nucleus. Functionally, DNA-binding protein that binds to the to a 5'-TGTACAGTGT-3' core sequence. May function as a transcriptional transactivator and transcriptional repressor. Probably exerts its repressor effect by preventing GATA3 from binding to DNA. May play a role in regulating the differentiation and activation of helper T-cells. This is Zinc finger and BTB domain-containing protein 32 (Zbtb32) from Mus musculus (Mouse).